The sequence spans 185 residues: Large ribosomal subunit protein uL5 (185 aa).

Belongs to the universal ribosomal protein uL5 family. In terms of assembly, part of the 50S ribosomal subunit; part of the 5S rRNA/L5/L18/L25 subcomplex. Contacts the 5S rRNA and the P site tRNA. Forms a bridge to the 30S subunit in the 70S ribosome.

Functionally, this is one of the proteins that bind and probably mediate the attachment of the 5S RNA into the large ribosomal subunit, where it forms part of the central protuberance. In the 70S ribosome it contacts protein S13 of the 30S subunit (bridge B1b), connecting the 2 subunits; this bridge is implicated in subunit movement. Contacts the P site tRNA; the 5S rRNA and some of its associated proteins might help stabilize positioning of ribosome-bound tRNAs. The sequence is that of Large ribosomal subunit protein uL5 from Azorhizobium caulinodans (strain ATCC 43989 / DSM 5975 / JCM 20966 / LMG 6465 / NBRC 14845 / NCIMB 13405 / ORS 571).